Reading from the N-terminus, the 1129-residue chain is Ubiquitin carboxyl-terminal hydrolase 7 (1129 aa).

Residues 1–20 are disordered; the sequence is MEIETDQSIEAMDTQDTQEV. In terms of domain architecture, MATH spans 101 to 222; the sequence is ETTFSFTVEN…NNSITLEVHV (122 aa). In terms of domain architecture, USP spans 241–548; that stretch reads VGLKNQGATC…NAYMLVYIRQ (308 aa). Cys-250 serves as the catalytic Nucleophile. The active-site Proton acceptor is His-490. Ser-1117 is subject to Phosphoserine.

The protein belongs to the peptidase C19 family.

The protein localises to the nucleus. The enzyme catalyses Thiol-dependent hydrolysis of ester, thioester, amide, peptide and isopeptide bonds formed by the C-terminal Gly of ubiquitin (a 76-residue protein attached to proteins as an intracellular targeting signal).. In terms of biological role, hydrolase that deubiquitinates target proteins. This chain is Ubiquitin carboxyl-terminal hydrolase 7 (Usp7), found in Drosophila melanogaster (Fruit fly).